Reading from the N-terminus, the 448-residue chain is ATP-dependent protease ATPase subunit HslU (448 aa).

ATP is bound by residues I23, 65–70 (GIGKTE), D263, E327, and R399.

The protein belongs to the ClpX chaperone family. HslU subfamily. A double ring-shaped homohexamer of HslV is capped on each side by a ring-shaped HslU homohexamer. The assembly of the HslU/HslV complex is dependent on binding of ATP.

It localises to the cytoplasm. ATPase subunit of a proteasome-like degradation complex; this subunit has chaperone activity. The binding of ATP and its subsequent hydrolysis by HslU are essential for unfolding of protein substrates subsequently hydrolyzed by HslV. HslU recognizes the N-terminal part of its protein substrates and unfolds these before they are guided to HslV for hydrolysis. The sequence is that of ATP-dependent protease ATPase subunit HslU from Borreliella burgdorferi (strain ATCC 35210 / DSM 4680 / CIP 102532 / B31) (Borrelia burgdorferi).